Consider the following 70-residue polypeptide: Large ribosomal subunit protein bL31 (70 aa).

Residues Cys16, Cys18, Cys37, and Cys40 each coordinate Zn(2+).

Belongs to the bacterial ribosomal protein bL31 family. Type A subfamily. Part of the 50S ribosomal subunit. It depends on Zn(2+) as a cofactor.

Functionally, binds the 23S rRNA. The protein is Large ribosomal subunit protein bL31 of Glaesserella parasuis serovar 5 (strain SH0165) (Haemophilus parasuis).